A 1367-amino-acid polypeptide reads, in one-letter code: Insulin-like growth factor 1 receptor (1367 aa).

Positions 1 to 30 (MKSGSGGGSPTSLWGLLFLSAALSLWPTSG) are cleaved as a signal peptide. A disulfide bridge connects residues cysteine 33 and cysteine 52. Residues asparagine 51, asparagine 102, and asparagine 135 are each glycosylated (N-linked (GlcNAc...) asparagine). Disulfide bonds link cysteine 150–cysteine 178, cysteine 182–cysteine 205, cysteine 192–cysteine 211, cysteine 215–cysteine 224, cysteine 219–cysteine 230, cysteine 231–cysteine 239, cysteine 235–cysteine 248, cysteine 251–cysteine 260, cysteine 264–cysteine 276, cysteine 282–cysteine 303, cysteine 307–cysteine 321, cysteine 324–cysteine 328, and cysteine 332–cysteine 353. Asparagine 244 carries an N-linked (GlcNAc...) asparagine glycan. Asparagine 314 carries an N-linked (GlcNAc...) asparagine glycan. N-linked (GlcNAc...) asparagine glycosylation is found at asparagine 417 and asparagine 438. An intrachain disulfide couples cysteine 455 to cysteine 488. 4 consecutive Fibronectin type-III domains span residues 491 to 609 (DVLH…TNAS), 610 to 708 (VPSI…TEAE), 735 to 828 (PERK…TMPA), and 834 to 927 (IPGP…VQAK). Residues asparagine 534, asparagine 607, asparagine 622, asparagine 640, asparagine 747, asparagine 756, asparagine 764, asparagine 900, and asparagine 913 are each glycosylated (N-linked (GlcNAc...) asparagine). Topologically, residues 741 to 935 (DVMQVANTTM…AKTGYENFIH (195 aa)) are extracellular. A helical membrane pass occupies residues 936–959 (LIIALPVAVLLIVGGLVIMLYVFH). Over 960-1367 (RKRNNSRLGN…ALPLPQSSTC (408 aa)) the chain is Cytoplasmic. Positions 977-980 (NPEY) match the IRS1- and SHC1-binding motif. A Phosphotyrosine modification is found at tyrosine 980. The region spanning 999–1274 (ITMSRELGQG…SIKEEMEPGF (276 aa)) is the Protein kinase domain. Residues 1005–1013 (LGQGSFGMV) and lysine 1033 each bind ATP. The active-site Proton acceptor is aspartate 1135. Phosphotyrosine; by autocatalysis occurs at positions 1161, 1165, and 1166. Glycyl lysine isopeptide (Lys-Gly) (interchain with G-Cter in ubiquitin) cross-links involve residues lysine 1168 and lysine 1171. Phosphoserine; by GSK3-beta is present on serine 1278. Serine 1282 is modified (phosphoserine). The segment at 1288–1367 (PEPEELDLEP…ALPLPQSSTC (80 aa)) is disordered. Acidic residues predominate over residues 1290–1299 (PEELDLEPEN). Residues 1300–1316 (MESVPLDPSASSSSLPL) are compositionally biased toward low complexity. The span at 1317 to 1326 (PDRHSGHKAE) shows a compositional bias: basic and acidic residues.

This sequence belongs to the protein kinase superfamily. Tyr protein kinase family. Insulin receptor subfamily. As to quaternary structure, tetramer of 2 alpha and 2 beta chains linked by disulfide bonds. The alpha chains contribute to the formation of the ligand-binding domain, while the beta chain carries the kinase domain. Interacts with PIK3R1 and with the PTB/PID domains of IRS1 and SHC1 in vitro when autophosphorylated on tyrosine residues. Forms a hybrid receptor with INSR, the hybrid is a tetramer consisting of 1 alpha chain and 1 beta chain of INSR and 1 alpha chain and 1 beta chain of IGF1R. Interacts with ARRB1 and ARRB2. Interacts with GRB10. Interacts with RACK1. Interacts with SOCS1, SOCS2 and SOCS3. Interacts with 14-3-3 proteins. Interacts with NMD2. Interacts with MAP3K5. Interacts with STAT3. Found in a ternary complex with IGF1 and ITGAV:ITGB3 or ITGA6:ITGB4. Interacts (nascent precursor form) with ZFAND2B. In terms of assembly, (Microbial infection) Interacts with human respiratory syncytial virus (HRSV) fusion glycoprotein F1/F2 heterodimer. Post-translationally, autophosphorylated on tyrosine residues in response to ligand binding. Autophosphorylation occurs in trans, i.e. one subunit of the dimeric receptor phosphorylates tyrosine residues on the other subunit. Autophosphorylation occurs in a sequential manner; Tyr-1165 is predominantly phosphorylated first, followed by phosphorylation of Tyr-1161 and Tyr-1166. While every single phosphorylation increases kinase activity, all three tyrosine residues in the kinase activation loop (Tyr-1165, Tyr-1161 and Tyr-1166) have to be phosphorylated for optimal activity. Can be autophosphorylated at additional tyrosine residues (in vitro). Autophosphorylated is followed by phosphorylation of juxtamembrane tyrosines and C-terminal serines. May also be phosphorylated at Tyr-1161 and Tyr-1166 by mTORC2. Phosphorylation of Tyr-980 is required for IRS1- and SHC1-binding. Phosphorylation of Ser-1278 by GSK-3beta restrains kinase activity and promotes cell surface expression, it requires a priming phosphorylation at Ser-1282. Dephosphorylated by PTPN1. Polyubiquitinated at Lys-1168 and Lys-1171 through both 'Lys-48' and 'Lys-29' linkages, promoting receptor endocytosis and subsequent degradation by the proteasome. Ubiquitination is facilitated by pre-existing phosphorylation. In terms of processing, sumoylated with SUMO1. Post-translationally, controlled by regulated intramembrane proteolysis (RIP). Undergoes metalloprotease-dependent constitutive ectodomain shedding to produce a membrane-anchored 52 kDa C-Terminal fragment which is further processed by presenilin gamma-secretase to yield an intracellular 50 kDa fragment. In terms of tissue distribution, found as a hybrid receptor with INSR in muscle, heart, kidney, adipose tissue, skeletal muscle, hepatoma, fibroblasts, spleen and placenta (at protein level). Expressed in a variety of tissues. Overexpressed in tumors, including melanomas, cancers of the colon, pancreas prostate and kidney.

The protein resides in the cell membrane. The enzyme catalyses L-tyrosyl-[protein] + ATP = O-phospho-L-tyrosyl-[protein] + ADP + H(+). Activated by autophosphorylation at Tyr-1165, Tyr-1161 and Tyr-1166 on the kinase activation loop; phosphorylation at all three tyrosine residues is required for optimal kinase activity. Inhibited by MSC1609119A-1, BMS-754807, PQIP, benzimidazole pyridinone, isoquinolinedione, bis-azaindole, 3-cyanoquinoline, 2,4-bis-arylamino-1,3-pyrimidine, pyrrolopyrimidine, pyrrole-5-carboxaldehyde, picropodophyllin (PPP), tyrphostin derivatives. While most inhibitors bind to the ATP binding pocket, MSC1609119A-1 functions as allosteric inhibitor and binds close to the DFG motif and the activation loop. Receptor tyrosine kinase which mediates actions of insulin-like growth factor 1 (IGF1). Binds IGF1 with high affinity and IGF2 and insulin (INS) with a lower affinity. The activated IGF1R is involved in cell growth and survival control. IGF1R is crucial for tumor transformation and survival of malignant cell. Ligand binding activates the receptor kinase, leading to receptor autophosphorylation, and tyrosines phosphorylation of multiple substrates, that function as signaling adapter proteins including, the insulin-receptor substrates (IRS1/2), Shc and 14-3-3 proteins. Phosphorylation of IRSs proteins lead to the activation of two main signaling pathways: the PI3K-AKT/PKB pathway and the Ras-MAPK pathway. The result of activating the MAPK pathway is increased cellular proliferation, whereas activating the PI3K pathway inhibits apoptosis and stimulates protein synthesis. Phosphorylated IRS1 can activate the 85 kDa regulatory subunit of PI3K (PIK3R1), leading to activation of several downstream substrates, including protein AKT/PKB. AKT phosphorylation, in turn, enhances protein synthesis through mTOR activation and triggers the antiapoptotic effects of IGFIR through phosphorylation and inactivation of BAD. In parallel to PI3K-driven signaling, recruitment of Grb2/SOS by phosphorylated IRS1 or Shc leads to recruitment of Ras and activation of the ras-MAPK pathway. In addition to these two main signaling pathways IGF1R signals also through the Janus kinase/signal transducer and activator of transcription pathway (JAK/STAT). Phosphorylation of JAK proteins can lead to phosphorylation/activation of signal transducers and activators of transcription (STAT) proteins. In particular activation of STAT3, may be essential for the transforming activity of IGF1R. The JAK/STAT pathway activates gene transcription and may be responsible for the transforming activity. JNK kinases can also be activated by the IGF1R. IGF1 exerts inhibiting activities on JNK activation via phosphorylation and inhibition of MAP3K5/ASK1, which is able to directly associate with the IGF1R. Functionally, when present in a hybrid receptor with INSR, binds IGF1. PubMed:12138094 shows that hybrid receptors composed of IGF1R and INSR isoform Long are activated with a high affinity by IGF1, with low affinity by IGF2 and not significantly activated by insulin, and that hybrid receptors composed of IGF1R and INSR isoform Short are activated by IGF1, IGF2 and insulin. In contrast, PubMed:16831875 shows that hybrid receptors composed of IGF1R and INSR isoform Long and hybrid receptors composed of IGF1R and INSR isoform Short have similar binding characteristics, both bind IGF1 and have a low affinity for insulin. This is Insulin-like growth factor 1 receptor (IGF1R) from Homo sapiens (Human).